The sequence spans 185 residues: Protein GrpE (185 aa).

Belongs to the GrpE family. Homodimer.

The protein localises to the cytoplasm. Functionally, participates actively in the response to hyperosmotic and heat shock by preventing the aggregation of stress-denatured proteins, in association with DnaK and GrpE. It is the nucleotide exchange factor for DnaK and may function as a thermosensor. Unfolded proteins bind initially to DnaJ; upon interaction with the DnaJ-bound protein, DnaK hydrolyzes its bound ATP, resulting in the formation of a stable complex. GrpE releases ADP from DnaK; ATP binding to DnaK triggers the release of the substrate protein, thus completing the reaction cycle. Several rounds of ATP-dependent interactions between DnaJ, DnaK and GrpE are required for fully efficient folding. The chain is Protein GrpE from Methanobrevibacter smithii (strain ATCC 35061 / DSM 861 / OCM 144 / PS).